Consider the following 142-residue polypeptide: Calmodulin-alpha (142 aa).

Position 2 is an N-acetylalanine (alanine 2). 4 EF-hand domains span residues 8–43 (EQIAEFKEAFSLFDKDGDGTITTKELGTVMRSLGQN), 44–79 (PTEAELQDMINEVDADGNGTIDFPEFLTMMARKMKD), 81–116 (DSEEEIREAFRVFDKDGNGYISAAELRHVMTNLGEK), and 117–142 (LTDEEVDEMIREADIDGDGQVNYEEF). Positions 21, 23, 25, 27, 32, 57, 59, 61, 63, 68, 94, 96, 98, 100, and 105 each coordinate Ca(2+). Lysine 116 bears the N6,N6,N6-trimethyllysine mark. Ca(2+) is bound by residues aspartate 130, aspartate 132, aspartate 134, glutamine 136, and glutamate 141.

This sequence belongs to the calmodulin family.

Functionally, calmodulin mediates the control of a large number of enzymes, ion channels and other proteins by Ca(2+). Among the enzymes to be stimulated by the calmodulin-Ca(2+) complex are a number of protein kinases and phosphatases. The protein is Calmodulin-alpha of Arbacia punctulata (Punctuate sea urchin).